The chain runs to 192 residues: Ion-translocating oxidoreductase complex subunit B (192 aa).

Residues 1–26 form a hydrophobic region; the sequence is MNAIWIAVAAVSLLGLAFGAILGYAS. Positions 32–91 constitute a 4Fe-4S domain; that stretch reads EDDPVVEKIDEILPQSQCGQCGYPGCRPYAETISCNGEKINRCAPGGEAVMLKIAELLNV. Positions 49, 52, 57, 74, 117, 120, 123, 127, 147, 150, 153, and 157 each coordinate [4Fe-4S] cluster. 4Fe-4S ferredoxin-type domains follow at residues 108-137 and 138-167; these read MVAV…GATR and AMHT…LQPV.

Belongs to the 4Fe4S bacterial-type ferredoxin family. RnfB subfamily. The complex is composed of six subunits: RsxA, RsxB, RsxC, RsxD, RsxE and RsxG. [4Fe-4S] cluster is required as a cofactor.

It is found in the cell inner membrane. Its function is as follows. Part of a membrane-bound complex that couples electron transfer with translocation of ions across the membrane. Required to maintain the reduced state of SoxR. This is Ion-translocating oxidoreductase complex subunit B from Escherichia coli O6:K15:H31 (strain 536 / UPEC).